Here is a 346-residue protein sequence, read N- to C-terminus: Methylthioribose-1-phosphate isomerase (346 aa).

Residues 48-50 (RGA), Arg-91, and Gln-196 contribute to the substrate site. Catalysis depends on Asp-237, which acts as the Proton donor. 247 to 248 (NK) provides a ligand contact to substrate.

Belongs to the eIF-2B alpha/beta/delta subunits family. MtnA subfamily.

The enzyme catalyses 5-(methylsulfanyl)-alpha-D-ribose 1-phosphate = 5-(methylsulfanyl)-D-ribulose 1-phosphate. Its pathway is amino-acid biosynthesis; L-methionine biosynthesis via salvage pathway; L-methionine from S-methyl-5-thio-alpha-D-ribose 1-phosphate: step 1/6. Functionally, catalyzes the interconversion of methylthioribose-1-phosphate (MTR-1-P) into methylthioribulose-1-phosphate (MTRu-1-P). This Thermosipho melanesiensis (strain DSM 12029 / CIP 104789 / BI429) protein is Methylthioribose-1-phosphate isomerase.